A 221-amino-acid chain; its full sequence is 7-cyano-7-deazaguanine synthase (221 aa).

12 to 22 (FSGGQDSTTCL) contacts ATP. Residues C190, C199, C202, and C205 each contribute to the Zn(2+) site.

The protein belongs to the QueC family. Homodimer. It depends on Zn(2+) as a cofactor.

The catalysed reaction is 7-carboxy-7-deazaguanine + NH4(+) + ATP = 7-cyano-7-deazaguanine + ADP + phosphate + H2O + H(+). It functions in the pathway purine metabolism; 7-cyano-7-deazaguanine biosynthesis. Functionally, catalyzes the ATP-dependent conversion of 7-carboxy-7-deazaguanine (CDG) to 7-cyano-7-deazaguanine (preQ(0)). The protein is 7-cyano-7-deazaguanine synthase of Clostridium novyi (strain NT).